The chain runs to 420 residues: Protein maelstrom homolog (420 aa).

Residues 4–73 constitute a DNA-binding region (HMG box); it reads RRASRNAYYF…AQGKDSGPSE (70 aa). Disordered stretches follow at residues 62-94, 341-372, and 392-420; these read RAAQ…KQNV, GFSH…GQNS, and NIHK…SSLS. Composition is skewed to polar residues over residues 344-358 and 392-407; these read HFSS…NTPT and NIHK…SPYT.

Belongs to the maelstrom family. As to quaternary structure, interacts with SMARCB1, SIN3B and DDX4. Interacts with piRNA-associated proteins TDRD1, PIWIL1 and PIWIL2. Interacts with TEX19.

It localises to the cytoplasm. The protein localises to the nucleus. In terms of biological role, plays a central role during spermatogenesis by repressing transposable elements and preventing their mobilization, which is essential for the germline integrity. Acts via the piRNA metabolic process, which mediates the repression of transposable elements during meiosis by forming complexes composed of piRNAs and Piwi proteins and governs the methylation and subsequent repression of transposons. Its association with piP-bodies suggests a participation in the secondary piRNAs metabolic process. Required for the localization of germ-cell factors to the meiotic nuage. This Bos taurus (Bovine) protein is Protein maelstrom homolog (MAEL).